A 146-amino-acid chain; its full sequence is Large ribosomal subunit protein uL11 (146 aa).

Belongs to the universal ribosomal protein uL11 family. Part of the ribosomal stalk of the 50S ribosomal subunit. Interacts with L10 and the large rRNA to form the base of the stalk. L10 forms an elongated spine to which L12 dimers bind in a sequential fashion forming a multimeric L10(L12)X complex. One or more lysine residues are methylated.

In terms of biological role, forms part of the ribosomal stalk which helps the ribosome interact with GTP-bound translation factors. The chain is Large ribosomal subunit protein uL11 from Corynebacterium kroppenstedtii (strain DSM 44385 / JCM 11950 / CIP 105744 / CCUG 35717).